The following is a 725-amino-acid chain: Exocyst complex component 8 (725 aa).

Position 19 is a phosphoserine (Ser19). The interval 116–159 (AASGGEEGGGGAGGRDQLRGQTGFFPSPGGASRDGSGPGEEGKQ) is disordered. Residues 120 to 129 (GEEGGGGAGG) are compositionally biased toward gly residues. The PH domain maps to 182–282 (YLVYNGDLVE…WLEVLEETKR (101 aa)). The tract at residues 285-322 (SEKRRREQEEAAAPRGPPQVTPKASNPFEDEDDDEPTV) is disordered. Residues 312 to 322 (FEDEDDDEPTV) are compositionally biased toward acidic residues.

Belongs to the EXO84 family. The exocyst complex is composed of EXOC1, EXOC2, EXOC3, EXOC4, EXOC5, EXOC6, EXOC7 and EXOC8. Interacts (via PH domain) with GTP-bound RALA and RALB. Interacts with SH3BP1; required for the localization of both SH3BP1 and the exocyst to the leading edge of migrating cells.

It localises to the cytoplasm. The protein resides in the perinuclear region. The protein localises to the cell projection. Its subcellular location is the growth cone. In terms of biological role, component of the exocyst complex involved in the docking of exocytic vesicles with fusion sites on the plasma membrane. The protein is Exocyst complex component 8 (EXOC8) of Bos taurus (Bovine).